Consider the following 391-residue polypeptide: MKFVDEAVVKVQAGDGGSGVVSFWREKFITKGGPDGGDGGDGGDVYIQADENLNTLIDYRFQRFYEAERGENGRGGNCTGKRGKDITLRVPVGTRAVDIHTNEIVAEVAEHGKKVMVAKGGWHGLGNTRFKSSVNRAPRQRTLGTKGEIREIRLELLLLADVGMLGLPNAGKSTFIRAVSAAKPKVADYPFTTLIPSLGVVSVVPEKSFVVADIPGLIEGAADGAGLGIRFLKHLERCRVLLHMIDIMPIDQSDPIQNALTIIDELEQYSEKLAGKPRWLVFNKTDLMPEEEANEKIQEILDALGWEDEYFKISAINRNGTKELCYKLADFMENLPREEEEVAEEDKVNFMWDDYHKDAIAGKDVITEEDDDDWDDCDDEDDDGHVVYVRD.

The Obg domain maps to 1 to 159 (MKFVDEAVVK…REIRLELLLL (159 aa)). An OBG-type G domain is found at 160–333 (ADVGMLGLPN…LCYKLADFME (174 aa)). Residues 166–173 (GLPNAGKS), 191–195 (FTTLI), 213–216 (DIPG), 283–286 (NKTD), and 314–316 (SAI) contribute to the GTP site. Serine 173 and threonine 193 together coordinate Mg(2+). Acidic residues predominate over residues 367–383 (TEEDDDDWDDCDDEDDD). A disordered region spans residues 367–391 (TEEDDDDWDDCDDEDDDGHVVYVRD).

This sequence belongs to the TRAFAC class OBG-HflX-like GTPase superfamily. OBG GTPase family. As to quaternary structure, monomer. Requires Mg(2+) as cofactor.

It localises to the cytoplasm. Functionally, an essential GTPase which binds GTP, GDP and possibly (p)ppGpp with moderate affinity, with high nucleotide exchange rates and a fairly low GTP hydrolysis rate. Plays a role in control of the cell cycle, stress response, ribosome biogenesis and in those bacteria that undergo differentiation, in morphogenesis control. The protein is GTPase Obg of Vibrio campbellii (strain ATCC BAA-1116).